We begin with the raw amino-acid sequence, 155 residues long: SsrA-binding protein (155 aa).

Belongs to the SmpB family.

The protein localises to the cytoplasm. In terms of biological role, required for rescue of stalled ribosomes mediated by trans-translation. Binds to transfer-messenger RNA (tmRNA), required for stable association of tmRNA with ribosomes. tmRNA and SmpB together mimic tRNA shape, replacing the anticodon stem-loop with SmpB. tmRNA is encoded by the ssrA gene; the 2 termini fold to resemble tRNA(Ala) and it encodes a 'tag peptide', a short internal open reading frame. During trans-translation Ala-aminoacylated tmRNA acts like a tRNA, entering the A-site of stalled ribosomes, displacing the stalled mRNA. The ribosome then switches to translate the ORF on the tmRNA; the nascent peptide is terminated with the 'tag peptide' encoded by the tmRNA and targeted for degradation. The ribosome is freed to recommence translation, which seems to be the essential function of trans-translation. The polypeptide is SsrA-binding protein (Geobacillus thermodenitrificans (strain NG80-2)).